The following is a 349-amino-acid chain: Protein-glutamate methylesterase/protein-glutamine glutaminase (349 aa).

Positions 2-118 (RVLVVDDSAL…VDLSSVAQEL (117 aa)) constitute a Response regulatory domain. Aspartate 52 is modified (4-aspartylphosphate). In terms of domain architecture, CheB-type methylesterase spans 159–345 (VLIGSSTGGP…EEIVRFLEVK (187 aa)). Active-site residues include serine 164, histidine 191, and aspartate 287.

It belongs to the CheB family. In terms of processing, phosphorylated by CheA. Phosphorylation of the N-terminal regulatory domain activates the methylesterase activity.

The protein resides in the cytoplasm. The catalysed reaction is [protein]-L-glutamate 5-O-methyl ester + H2O = L-glutamyl-[protein] + methanol + H(+). It carries out the reaction L-glutaminyl-[protein] + H2O = L-glutamyl-[protein] + NH4(+). In terms of biological role, involved in chemotaxis. Part of a chemotaxis signal transduction system that modulates chemotaxis in response to various stimuli. Catalyzes the demethylation of specific methylglutamate residues introduced into the chemoreceptors (methyl-accepting chemotaxis proteins or MCP) by CheR. Also mediates the irreversible deamidation of specific glutamine residues to glutamic acid. In Archaeoglobus fulgidus (strain ATCC 49558 / DSM 4304 / JCM 9628 / NBRC 100126 / VC-16), this protein is Protein-glutamate methylesterase/protein-glutamine glutaminase.